A 387-amino-acid polypeptide reads, in one-letter code: GDP-mannose transporter (387 aa).

Positions 1 to 25 are enriched in basic and acidic residues; the sequence is MADTKKNDNYAIDMDKLDAESDRFR. The Cytoplasmic portion of the chain corresponds to 1–42; it reads MADTKKNDNYAIDMDKLDAESDRFRPPPQPQPRHSSSSHSQS. Positions 1 to 45 are disordered; that stretch reads MADTKKNDNYAIDMDKLDAESDRFRPPPQPQPRHSSSSHSQSISN. Over residues 32 to 45 the composition is skewed to low complexity; it reads PRHSSSSHSQSISN. Residues 43 to 63 traverse the membrane as a helical segment; that stretch reads ISNSPVLPILSYCASSILMTV. The Lumenal portion of the chain corresponds to 64 to 71; sequence TNKYVLSG. Residues 72–92 form a helical membrane-spanning segment; that stretch reads VQFNLNFFLLCVQSVVCIIAI. Residues 93–112 lie on the Cytoplasmic side of the membrane; the sequence is QTCKSMGLINYRDFNSDEAK. Residues 113-129 form a helical membrane-spanning segment; the sequence is KWFPISLLLIGMIYTGT. The Lumenal segment spans residues 130 to 136; it reads KALKFLS. A helical membrane pass occupies residues 137-153; it reads IPVYTIFKNLTIILIAY. Topologically, residues 154 to 162 are cytoplasmic; it reads GEVLWFGGS. A helical transmembrane segment spans residues 163–184; sequence VTGMALFSFGLMVLSSVIAAWA. The Lumenal segment spans residues 185-206; that stretch reads DIKHALDTSGFSGAEATSKIST. The helical transmembrane segment at 207-227 threads the bilayer; it reads LNAGYIWMLINCLCTSTYILG. Over 228–241 the chain is Cytoplasmic; the sequence is MRKRIKLTNFKDFD. The chain crosses the membrane as a helical span at residues 242–262; the sequence is TMFYNNLLSIPILMIGSFIVE. Over 263–280 the chain is Lumenal; sequence DWSSENINKNFPIETRNS. Residues 281 to 301 traverse the membrane as a helical segment; that stretch reads LIFAMIFSGLSSVFISYTSAW. The Cytoplasmic portion of the chain corresponds to 302-309; it reads CVRVTSST. The helical transmembrane segment at 310–329 threads the bilayer; it reads TYSMVGALNKLPIALSGLIF. At 330-332 the chain is on the lumenal side; it reads FGD. The chain crosses the membrane as a helical span at residues 333 to 355; it reads PVTVPSVSAIVVGFISGIVYSLA. Residues 356–387 lie on the Cytoplasmic side of the membrane; it reads KVKQNAKPRTGVLPTTNPVSASTQSMRDGLKS. The disordered stretch occupies residues 366-387; the sequence is GVLPTTNPVSASTQSMRDGLKS. The span at 368-381 shows a compositional bias: polar residues; sequence LPTTNPVSASTQSM.

This sequence belongs to the TPT transporter family. SLC35D subfamily. Homooligomer.

Its subcellular location is the golgi apparatus membrane. The protein resides in the cytoplasmic vesicle membrane. It localises to the endoplasmic reticulum membrane. Functionally, involved in the import of GDP-mannose from the cytoplasm into the Golgi lumen. In Coccidioides immitis (strain RS) (Valley fever fungus), this protein is GDP-mannose transporter (VRG4).